The chain runs to 259 residues: Putative electron transfer flavoprotein subunit YgcR (259 aa).

It belongs to the ETF beta-subunit/FixA family. YgcQ and YgcR form a heterodimer.

In terms of biological role, may play a role in a redox process. The sequence is that of Putative electron transfer flavoprotein subunit YgcR (ygcR) from Escherichia coli (strain K12).